We begin with the raw amino-acid sequence, 283 residues long: Bifunctional protein FolD (283 aa).

NADP(+) is bound by residues 164–166, Ser189, and Ile230; that span reads GRS.

Belongs to the tetrahydrofolate dehydrogenase/cyclohydrolase family. In terms of assembly, homodimer.

The catalysed reaction is (6R)-5,10-methylene-5,6,7,8-tetrahydrofolate + NADP(+) = (6R)-5,10-methenyltetrahydrofolate + NADPH. The enzyme catalyses (6R)-5,10-methenyltetrahydrofolate + H2O = (6R)-10-formyltetrahydrofolate + H(+). It participates in one-carbon metabolism; tetrahydrofolate interconversion. Its function is as follows. Catalyzes the oxidation of 5,10-methylenetetrahydrofolate to 5,10-methenyltetrahydrofolate and then the hydrolysis of 5,10-methenyltetrahydrofolate to 10-formyltetrahydrofolate. This chain is Bifunctional protein FolD, found in Lacticaseibacillus casei (strain BL23) (Lactobacillus casei).